Here is a 739-residue protein sequence, read N- to C-terminus: DNA ligase (739 aa).

A disordered region spans residues 1 to 29; that stretch reads MTANRPALPTRDKAVSDLSATEASDEHAA. NAD(+) is bound by residues 51-55, 100-101, and glutamate 134; these read DADYD and SL. Lysine 136 serves as the catalytic N6-AMP-lysine intermediate. The NAD(+) site is built by arginine 157, glutamate 194, lysine 311, and lysine 335. Cysteine 440, cysteine 443, cysteine 464, and cysteine 470 together coordinate Zn(2+). The disordered stretch occupies residues 592 to 612; it reads PTEMEEASEETPPTRRRKPQG. The region spanning 662–739 is the BRCT domain; sequence ASTSPVSGKT…TEDEWFDLVG (78 aa).

It belongs to the NAD-dependent DNA ligase family. LigA subfamily. Mg(2+) is required as a cofactor. Requires Mn(2+) as cofactor.

The enzyme catalyses NAD(+) + (deoxyribonucleotide)n-3'-hydroxyl + 5'-phospho-(deoxyribonucleotide)m = (deoxyribonucleotide)n+m + AMP + beta-nicotinamide D-nucleotide.. In terms of biological role, DNA ligase that catalyzes the formation of phosphodiester linkages between 5'-phosphoryl and 3'-hydroxyl groups in double-stranded DNA using NAD as a coenzyme and as the energy source for the reaction. It is essential for DNA replication and repair of damaged DNA. This chain is DNA ligase, found in Azorhizobium caulinodans (strain ATCC 43989 / DSM 5975 / JCM 20966 / LMG 6465 / NBRC 14845 / NCIMB 13405 / ORS 571).